Reading from the N-terminus, the 235-residue chain is Small ribosomal subunit protein eS4 (235 aa).

Residues I43–E114 form the S4 RNA-binding domain.

It belongs to the eukaryotic ribosomal protein eS4 family.

The sequence is that of Small ribosomal subunit protein eS4 from Korarchaeum cryptofilum (strain OPF8).